The sequence spans 279 residues: Pantothenate synthetase (279 aa).

26–33 lines the ATP pocket; that stretch reads MGNLHEGH. Catalysis depends on His-33, which acts as the Proton donor. Gln-57 lines the (R)-pantoate pocket. Gln-57 contributes to the beta-alanine binding site. 144 to 147 lines the ATP pocket; sequence GKKD. Position 150 (Gln-150) interacts with (R)-pantoate. ATP contacts are provided by residues Val-173 and 181 to 184; that span reads LSSR.

It belongs to the pantothenate synthetase family. In terms of assembly, homodimer.

It localises to the cytoplasm. The enzyme catalyses (R)-pantoate + beta-alanine + ATP = (R)-pantothenate + AMP + diphosphate + H(+). The protein operates within cofactor biosynthesis; (R)-pantothenate biosynthesis; (R)-pantothenate from (R)-pantoate and beta-alanine: step 1/1. Catalyzes the condensation of pantoate with beta-alanine in an ATP-dependent reaction via a pantoyl-adenylate intermediate. The protein is Pantothenate synthetase of Burkholderia ambifaria (strain MC40-6).